A 208-amino-acid polypeptide reads, in one-letter code: Uracil phosphoribosyltransferase (208 aa).

Residues Arg-77, Arg-102, and 129–137 (DPMLATGNS) contribute to the 5-phospho-alpha-D-ribose 1-diphosphate site. Residues Ile-193 and 198–200 (GDA) contribute to the uracil site. Asp-199 lines the 5-phospho-alpha-D-ribose 1-diphosphate pocket.

This sequence belongs to the UPRTase family. Mg(2+) is required as a cofactor.

It catalyses the reaction UMP + diphosphate = 5-phospho-alpha-D-ribose 1-diphosphate + uracil. Its pathway is pyrimidine metabolism; UMP biosynthesis via salvage pathway; UMP from uracil: step 1/1. Allosterically activated by GTP. Functionally, catalyzes the conversion of uracil and 5-phospho-alpha-D-ribose 1-diphosphate (PRPP) to UMP and diphosphate. The protein is Uracil phosphoribosyltransferase of Mycoplasmopsis pulmonis (strain UAB CTIP) (Mycoplasma pulmonis).